The chain runs to 689 residues: Glycine--tRNA ligase beta subunit (689 aa).

This sequence belongs to the class-II aminoacyl-tRNA synthetase family. As to quaternary structure, tetramer of two alpha and two beta subunits.

It localises to the cytoplasm. The enzyme catalyses tRNA(Gly) + glycine + ATP = glycyl-tRNA(Gly) + AMP + diphosphate. The polypeptide is Glycine--tRNA ligase beta subunit (Dictyoglomus thermophilum (strain ATCC 35947 / DSM 3960 / H-6-12)).